We begin with the raw amino-acid sequence, 58 residues long: Large ribosomal subunit protein uL30 (58 aa).

The protein belongs to the universal ribosomal protein uL30 family. Part of the 50S ribosomal subunit.

This chain is Large ribosomal subunit protein uL30, found in Parabacteroides distasonis (strain ATCC 8503 / DSM 20701 / CIP 104284 / JCM 5825 / NCTC 11152).